The primary structure comprises 856 residues: MEYNVKDFGAKGDGKTDDTDAIQAAIDAAHKAGGGTVYLPSGEYRVSGGDEASDGALIIKSNVYIVGAGMGETVIKLVDGWDEKLTGIIRSANGEKTHDYGISDLTIDGNQDNTEGEVDGFYTGYIPGKNGADYNVTVERVEIREVSRYAFDPHEQTINLTIRDSVAHDNGKDGFVADFQIGAVFENNVSYNNGRHGFNIVTSSHDIVFTNNVAYGNGANGLVVQRGSEDRDFVYNVEIEGGSFHDNGQEGVLIKMSTDVTLQGAEIYGNGYAGVRVQGVEDVRILDNYIHDNAQSKANAEVIVESYDDRDGPSDDYYETQNVTVKGNTIVGSANSTYGIQERADGTDYTSIGNNSVSGTQRGIVQLSGTNSTFSGRSGDAYQFIDGSTGNDLLTGTPIADLIVGGSGNDTLSGDAGNDVLEGGAGSDRLTGGEGADIFRFTAVSDSYYTASSSVADQILDFDASNDRIDLTGLGFTGLGDGYGGTLAVLANSDGSRTYLRSYEKDADGRYFSLTLDGNFVGRLDDSNLVFRHKTIAGTEGDDSLTGNAMAEILDGGSGNDSLAGGLGNDVLRGGAGDDILNGGLGRDQLSGGEGADIFRFTSVADSYQNSGDNFSDLILDFDPGEDRIDLSGLGFSGLGDGHNGTLLLWTSSETNRTYLKNFDTDADGRRFEIALEGVFSDLSEKQLVFERLVLEGTRLGDQLSGTELNEELLGGAGRDILNGGAGDDILDGGSERDTLTGGSGADVFRFNATLDSFRNYDNGTSRVDDITDFTVGEDLIDLSALGYSGLGNGYDGTLAVLLNADGTKTYLKDRESDADGNHFEIALDGNYADQLSNGDFIFTNLEVIGSSSQAA.

PbH1 repeat units lie at residues 133 to 155 (DYNVTVERVEIREVSRYAFDPHE), 157 to 179 (TINLTIRDSVAHDNGKDGFVADF), 180 to 202 (QIGAVFENNVSYNNGRHGFNIVT), 204 to 226 (SHDIVFTNNVAYGNGANGLVVQR), 234 to 256 (VYNVEIEGGSFHDNGQEGVLIKM), 257 to 279 (STDVTLQGAEIYGNGYAGVRVQG), 280 to 304 (VEDVRILDNYIHDNAQSKANAEVIV), and 320 to 342 (TQNVTVKGNTIVGSANSTYGIQE). 9 Hemolysin-type calcium-binding repeats span residues 387-402 (GSTGNDLLTGTPIADL), 404-421 (VGGSGNDTLSGDAGNDVL), 422-439 (EGGAGSDRLTGGEGADIF), 538-549 (GTEGDDSLTGNA), 554-563 (LDGGSGNDSL), 565-581 (GGLGNDVLRGGAGDDIL), 582-599 (NGGLGRDQLSGGEGADIF), 715-731 (GGAGRDILNGGAGDDIL), and 733-749 (GGSERDTLTGGSGADVF).

This sequence belongs to the D-mannuronate C5-epimerase family. Ca(2+) serves as cofactor.

The protein resides in the secreted. The enzyme catalyses Eliminative cleavage of alginate to give oligosaccharides with 4-deoxy-alpha-L-erythro-hex-4-enuronosyl groups at their non-reducing ends and beta-D-mannuronate at their reducing end.. It catalyses the reaction [(1-&gt;4)-beta-D-mannuronosyl](n) = [alginate](n). The protein operates within glycan biosynthesis; alginate biosynthesis. Inhibited by zinc. Its function is as follows. Converts beta-D-mannuronic acid (M) to alpha-L-guluronic acid (G). Has both epimerase and lyase activities. Contributes to abortive encystment by degrading the coat from inside the cyst. Important for cyst germination. This chain is Alginate lyase 7, found in Azotobacter vinelandii.